Reading from the N-terminus, the 694-residue chain is Follicle-stimulating hormone receptor (694 aa).

The signal sequence occupies residues 1 to 17 (MAFLWISFLVFLGSGSG). Cystine bridges form between C18-C25 and C23-C32. The 29-residue stretch at 18–46 (CHHRICHCSDRVFICQESKVTEIPSDIPR) folds into the LRRNT domain. Residues 18–367 (CHHRICHCSD…EDIMGYNFLR (350 aa)) lie on the Extracellular side of the membrane. LRR repeat units lie at residues 49 to 72 (VEMR…FRDL), 73 to 97 (EKIE…LPKL), 98 to 118 (HEIR…AFWN), 119 to 143 (LPNL…KIQS), 144 to 169 (HQKV…AGLS), 170 to 192 (SESE…AFNG), 193 to 216 (TQLD…IFQG), 217 to 240 (ANGP…GLKN), and 241 to 259 (LKKL…PNLD). N-linked (GlcNAc...) asparagine glycosylation is found at N191 and N199. N268 carries an N-linked (GlcNAc...) asparagine glycan. Cystine bridges form between C275–C347, C276–C292, C276–C357, and C292–C339. N-linked (GlcNAc...) asparagine glycosylation is present at N293. Y336 carries the post-translational modification Sulfotyrosine. A helical transmembrane segment spans residues 368 to 388 (VLIWFISILSITGNIVVLVIL). The Cytoplasmic segment spans residues 389–399 (ITSQYKLTVPR). The chain crosses the membrane as a helical span at residues 400-422 (FLMCNLAFADLCIGIYLLLIASV). At 423–444 (DIHTKSQYHNYAIDWQTGAGCD) the chain is on the extracellular side. C443 and C518 are disulfide-bonded. The helical transmembrane segment at 445 to 466 (AAGFFTVFASELSVYTLTAITL) threads the bilayer. At 467–486 (ERWHTITYAMQLDRKVRLRH) the chain is on the cytoplasmic side. The chain crosses the membrane as a helical span at residues 487 to 509 (AASIMLIGWIFAFSVALLPIFGV). The Extracellular segment spans residues 510–529 (SSYMKVSICLPMDIDSPLSQ). The helical transmembrane segment at 530-551 (FYVISLLVLNVLASVIICTCYT) threads the bilayer. The Cytoplasmic portion of the chain corresponds to 552–574 (HIYFTVRNPNIISSTSDAKIAKR). The helical transmembrane segment at 575–598 (MAMLIFTDFLCMAPISFFAISASV) threads the bilayer. Topologically, residues 599–609 (KMPLITVSKSK) are extracellular. A helical membrane pass occupies residues 610-631 (ILLVLFYPINSCANPFLYAVFT). Residues 632-694 (KTFRRDFFIL…YKLVPLNHLS (63 aa)) are Cytoplasmic-facing.

Belongs to the G-protein coupled receptor 1 family. FSH/LSH/TSH subfamily. As to quaternary structure, homotrimer. Functions as a homotrimer binding the FSH hormone heterodimer composed of CGA and FSHB. Interacts with ARRB2. Interacts with APPL2; interaction is independent of follicle stimulating hormone stimulation. In terms of processing, N-glycosylated; indirectly required for FSH-binding, possibly via a conformational change that allows high affinity binding of hormone. Sulfated.

The protein localises to the cell membrane. Its function is as follows. G protein-coupled receptor for follitropin, the follicle-stimulating hormone. Through cAMP production activates the downstream PI3K-AKT and ERK1/ERK2 signaling pathways. The sequence is that of Follicle-stimulating hormone receptor (FSHR) from Notamacropus eugenii (Tammar wallaby).